A 469-amino-acid polypeptide reads, in one-letter code: Probable ribonuclease FAU-1 (469 aa).

The protein belongs to the FAU-1 family.

In terms of biological role, probable RNase involved in rRNA stability through maturation and/or degradation of precursor rRNAs. Binds to RNA in loop regions with AU-rich sequences. The polypeptide is Probable ribonuclease FAU-1 (Pyrococcus abyssi (strain GE5 / Orsay)).